We begin with the raw amino-acid sequence, 366 residues long: Chorismate synthase (366 aa).

Arginine 48 and arginine 54 together coordinate NADP(+). Residues 125–127 (RSS), 238–239 (NA), glycine 278, 293–297 (KPTSS), and arginine 319 each bind FMN.

Belongs to the chorismate synthase family. In terms of assembly, homotetramer. FMNH2 serves as cofactor.

The enzyme catalyses 5-O-(1-carboxyvinyl)-3-phosphoshikimate = chorismate + phosphate. The protein operates within metabolic intermediate biosynthesis; chorismate biosynthesis; chorismate from D-erythrose 4-phosphate and phosphoenolpyruvate: step 7/7. Functionally, catalyzes the anti-1,4-elimination of the C-3 phosphate and the C-6 proR hydrogen from 5-enolpyruvylshikimate-3-phosphate (EPSP) to yield chorismate, which is the branch point compound that serves as the starting substrate for the three terminal pathways of aromatic amino acid biosynthesis. This reaction introduces a second double bond into the aromatic ring system. This chain is Chorismate synthase, found in Burkholderia multivorans (strain ATCC 17616 / 249).